Consider the following 521-residue polypeptide: Bifunctional purine biosynthesis protein PurH (521 aa).

One can recognise an MGS-like domain in the interval M1 to V145.

This sequence belongs to the PurH family.

It catalyses the reaction (6R)-10-formyltetrahydrofolate + 5-amino-1-(5-phospho-beta-D-ribosyl)imidazole-4-carboxamide = 5-formamido-1-(5-phospho-D-ribosyl)imidazole-4-carboxamide + (6S)-5,6,7,8-tetrahydrofolate. The catalysed reaction is IMP + H2O = 5-formamido-1-(5-phospho-D-ribosyl)imidazole-4-carboxamide. It functions in the pathway purine metabolism; IMP biosynthesis via de novo pathway; 5-formamido-1-(5-phospho-D-ribosyl)imidazole-4-carboxamide from 5-amino-1-(5-phospho-D-ribosyl)imidazole-4-carboxamide (10-formyl THF route): step 1/1. It participates in purine metabolism; IMP biosynthesis via de novo pathway; IMP from 5-formamido-1-(5-phospho-D-ribosyl)imidazole-4-carboxamide: step 1/1. This Burkholderia orbicola (strain MC0-3) protein is Bifunctional purine biosynthesis protein PurH.